A 340-amino-acid chain; its full sequence is MNGTRIEFEGITKVFDSGKKNITALDGVTLTVEPGEILGVIGYSGAGKSTLVRMINGLDTPTSGKLLLDGTDIVGMSEKKLRDIRAHIGMIFQQFNLFTSRTAAGNIEYPLKLAGVDKAERKRRVDELLAFVGLSDRGGNYPEELSGGQKQRVGIARALANNPALLLADEATSALDPETTHEVLELLRKVNRELGITIVVITHEMDVIRSIADKVAVMEAGKVVEYGSVYEVFSHPQTNVAKRFVSTSLRNTPDAIESEDLLAHEGRLFTITLSENSGFFTAAAKAKDAGASIGIVHGGITTLQKHSFGKVTVRLNGEKSVIDDFYAYLTTTTDIQEIQR.

The region spanning 6–245 (IEFEGITKVF…PQTNVAKRFV (240 aa)) is the ABC transporter domain. Position 42–49 (42–49 (GYSGAGKS)) interacts with ATP.

It belongs to the ABC transporter superfamily. Methionine importer (TC 3.A.1.24) family. The complex is composed of two ATP-binding proteins (MetN), two transmembrane proteins (MetI) and a solute-binding protein (MetQ).

The protein localises to the cell membrane. The enzyme catalyses L-methionine(out) + ATP + H2O = L-methionine(in) + ADP + phosphate + H(+). It catalyses the reaction D-methionine(out) + ATP + H2O = D-methionine(in) + ADP + phosphate + H(+). Part of the ABC transporter complex MetNIQ involved in methionine import. Responsible for energy coupling to the transport system. The chain is Methionine import ATP-binding protein MetN from Corynebacterium diphtheriae (strain ATCC 700971 / NCTC 13129 / Biotype gravis).